Consider the following 1915-residue polypeptide: Ankyrin repeat domain-containing protein 36A (1915 aa).

6 ANK repeats span residues 31-60 (YHLK…DANK), 64-93 (KERT…ELNL), 97-126 (EDRT…NPNI), 130-159 (FGRT…NIEE), 163-192 (CEYQ…NVNA), and 196-225 (LGRS…DVLS). 5 disordered regions span residues 261-331 (PINS…DEQK), 470-619 (ATGQ…QKQS), 639-663 (MGGG…DKTD), 676-1203 (LQCG…KATS), and 1285-1304 (KDVQ…SEGE). Polar residues-rich tracts occupy residues 262 to 272 (INSNPVSSQKQ) and 297 to 306 (KSGTVSSQKQ). Residues 505 to 521 (SLTSSEESSERPPLSTL) are compositionally biased toward low complexity. Composition is skewed to basic and acidic residues over residues 551-562 (PAEKATSDDKDS) and 585-596 (PAEKATSDEKDS). Polar residues-rich tracts occupy residues 597–619 (VSNI…QKQS) and 645–657 (GTVS…ASKA). Basic and acidic residues-rich tracts occupy residues 806–815 (RENKDGEKSR), 874–883 (RENKDGEKSR), 931–951 (SDEK…EISR), 976–985 (RENKDGEKSR), 1044–1053 (RENKDGEKSR), 1100–1121 (TSDE…EKSR), and 1134–1152 (ICDK…KDEQ). Polar residues predominate over residues 1175–1196 (VSNIPTEIKDGQQSGTVSSQKQ). 4 coiled-coil regions span residues 1383-1466 (IKLK…TEEQ), 1504-1531 (KEDL…IKNQ), 1573-1614 (LAAL…ARCD), and 1727-1814 (NMLL…KRDD). The segment at 1489–1508 (KTGGNNSNQVSETDEKEDLL) is disordered.

Belongs to the ANKRD36 family.

The protein is Ankyrin repeat domain-containing protein 36A (ANKRD36) of Homo sapiens (Human).